A 466-amino-acid chain; its full sequence is Gamma-aminobutyric acid receptor subunit gamma-2 (466 aa).

The N-terminal stretch at 1–38 (MSSPNTWSTGSTVYSPVFSQKMTLWILLLLSLYPGFTS) is a signal peptide. The Extracellular portion of the chain corresponds to 39–274 (QKSDDDYEDY…FDLSRRMGYF (236 aa)). N-linked (GlcNAc...) asparagine glycans are attached at residues N51 and N128. C189 and C203 form a disulfide bridge. N246 carries N-linked (GlcNAc...) asparagine glycosylation. Residues 275 to 295 (TIQTYIPCTLIVVLSWVSFWI) traverse the membrane as a helical segment. Topologically, residues 296–301 (NKDAVP) are cytoplasmic. A helical transmembrane segment spans residues 302 to 321 (ARTSLGITTVLTMTTLSTIA). Residues 322–333 (RKSLPKVSYVTA) lie on the Extracellular side of the membrane. A helical transmembrane segment spans residues 334-358 (MDLFVSVCFIFVFSALVEYGTLHYF). Topologically, residues 359 to 442 (VSNRKPSKDK…IHIRIAKMDS (84 aa)) are cytoplasmic. The helical transmembrane segment at 443-463 (YARIFFPTAFCLFNLVYWVSY) threads the bilayer. The Extracellular segment spans residues 464-466 (LYL).

The protein belongs to the ligand-gated ion channel (TC 1.A.9) family. Gamma-aminobutyric acid receptor (TC 1.A.9.5) subfamily. GABRG2 sub-subfamily. In terms of assembly, heteropentamer, formed by a combination of alpha (GABRA1-6), beta (GABRB1-3), gamma (GABRG1-3), delta (GABRD), epsilon (GABRE), rho (GABRR1-3), pi (GABRP) and theta (GABRQ) chains, each subunit exhibiting distinct physiological and pharmacological properties. Interacts with GABARAP. Interacts with KIF21B. Identified in a complex of 720 kDa composed of LHFPL4, NLGN2, GABRA1, GABRB2, GABRG2 and GABRB3. Interacts with LHFPL4. Interacts with SHISA7; interaction leads to the regulation of GABA(A) receptor trafficking, channel deactivation kinetics and pharmacology. Post-translationally, palmitoylated by ZDHHC3/GODZ; required for the accumulation of GABA(A) receptors at the postsynaptic membrane of inhibitory GABAergic synapses. In terms of processing, glycosylated. As to expression, expressed in brain (at protein level). Expressed in lungs, in alveolar epithelium.

It is found in the postsynaptic cell membrane. The protein localises to the cell membrane. The protein resides in the cell projection. Its subcellular location is the dendrite. It localises to the cytoplasmic vesicle membrane. It carries out the reaction chloride(in) = chloride(out). Its activity is regulated as follows. Allosterically activated by benzodiazepines. Activated by pentobarbital. Inhibited by the antagonist bicuculline. Inhibited by zinc ions. Potentiated by histamine. Functionally, gamma subunit of the heteropentameric ligand-gated chloride channel gated by gamma-aminobutyric acid (GABA), a major inhibitory neurotransmitter in the brain. GABA-gated chloride channels, also named GABA(A) receptors (GABAAR), consist of five subunits arranged around a central pore and contain GABA active binding site(s) located at the alpha and beta subunit interface(s). When activated by GABA, GABAARs selectively allow the flow of chloride anions across the cell membrane down their electrochemical gradient. Gamma-2/GABRG2-containing GABAARs are found at both synaptic and extrasynaptic sites. Chloride influx into the postsynaptic neuron following GABAAR opening decreases the neuron ability to generate a new action potential, thereby reducing nerve transmission. GABAARs containing alpha-1 and beta-2 or -3 subunits exhibit synaptogenic activity; the gamma-2 subunit being necessary but not sufficient to induce rapid synaptic contacts formation. Extrasynaptic gamma-2-containing receptors contribute to the tonic GABAergic inhibition. GABAARs function also as histamine receptor where histamine binds at the interface of two neighboring beta subunits and potentiates GABA response in a gamma-2 subunit-controlled manner. The chain is Gamma-aminobutyric acid receptor subunit gamma-2 from Rattus norvegicus (Rat).